The chain runs to 461 residues: MQSIILIGKPNVGKSSLFNRLARKRIAITSDISGTTRDTNKIEVQIDGKKALLIDSGGLDESNELFKNVKANSLKAAKNSDIIFYMVDGKFLPDDEDKAFFYEMKKLNKPIALVINKIDNKKDEERSWEFSNFGVKEVFNISVTHNIGIDELCMWASKFLNENFLDADDEEDFESYLENFDENSGDFKLKTINENHIKVGIIGRVNVGKSSLLNALVKEERSVVSDIAGTTIDPVNESIMHKDKIIEFVDTAGIRKRGKIQGLERYALNRTEYALTNAQIALLVLDAAEGFNELDERIAGLAAKHCLGVIIVLNKWDKSELDFDKTLKELKLDRFKFLAYAPVISVSALSGKRVHVLLDKILEVFANFTQKIPTAKLNALVEEATRAHPLPHDYGKLVKIYYAVQYDLAPPKIALIMNRPKALHFSYKRYLQNQIRKQFNFEGVPLIIVSRKKGSKDEQEG.

2 consecutive EngA-type G domains span residues 2 to 164 (QSII…NENF) and 197 to 369 (IKVG…ANFT). Residues 8–15 (GKPNVGKS), 55–59 (DSGGL), 116–119 (NKID), 203–210 (GRVNVGKS), 250–254 (DTAGI), and 314–317 (NKWD) contribute to the GTP site. Residues 370-454 (QKIPTAKLNA…PLIIVSRKKG (85 aa)) form the KH-like domain.

It belongs to the TRAFAC class TrmE-Era-EngA-EngB-Septin-like GTPase superfamily. EngA (Der) GTPase family. In terms of assembly, associates with the 50S ribosomal subunit.

Its function is as follows. GTPase that plays an essential role in the late steps of ribosome biogenesis. In Campylobacter lari (strain RM2100 / D67 / ATCC BAA-1060), this protein is GTPase Der.